A 193-amino-acid chain; its full sequence is Imidazoleglycerol-phosphate dehydratase (193 aa).

The protein belongs to the imidazoleglycerol-phosphate dehydratase family.

It localises to the cytoplasm. It catalyses the reaction D-erythro-1-(imidazol-4-yl)glycerol 3-phosphate = 3-(imidazol-4-yl)-2-oxopropyl phosphate + H2O. It participates in amino-acid biosynthesis; L-histidine biosynthesis; L-histidine from 5-phospho-alpha-D-ribose 1-diphosphate: step 6/9. The protein is Imidazoleglycerol-phosphate dehydratase of Saccharolobus islandicus (strain Y.G.57.14 / Yellowstone #1) (Sulfolobus islandicus).